The following is a 138-amino-acid chain: Large ribosomal subunit protein bL17 (138 aa).

Belongs to the bacterial ribosomal protein bL17 family. In terms of assembly, part of the 50S ribosomal subunit. Contacts protein L32.

The sequence is that of Large ribosomal subunit protein bL17 from Granulibacter bethesdensis (strain ATCC BAA-1260 / CGDNIH1).